Consider the following 100-residue polypeptide: Protein RnfH (100 aa).

Belongs to the UPF0125 (RnfH) family.

This chain is Protein RnfH, found in Actinobacillus succinogenes (strain ATCC 55618 / DSM 22257 / CCUG 43843 / 130Z).